The sequence spans 427 residues: 3-phosphoshikimate 1-carboxyvinyltransferase (427 aa).

3 residues coordinate 3-phosphoshikimate: Lys-22, Ser-23, and Arg-27. Residue Lys-22 participates in phosphoenolpyruvate binding. Positions 96 and 124 each coordinate phosphoenolpyruvate. Residues Ser-169, Ser-170, Gln-171, Ser-197, Asp-313, Asn-336, and Lys-340 each coordinate 3-phosphoshikimate. Phosphoenolpyruvate is bound at residue Gln-171. Asp-313 (proton acceptor) is an active-site residue. Phosphoenolpyruvate contacts are provided by Arg-344, Arg-386, and Lys-411.

This sequence belongs to the EPSP synthase family. In terms of assembly, monomer.

The protein localises to the cytoplasm. It carries out the reaction 3-phosphoshikimate + phosphoenolpyruvate = 5-O-(1-carboxyvinyl)-3-phosphoshikimate + phosphate. The protein operates within metabolic intermediate biosynthesis; chorismate biosynthesis; chorismate from D-erythrose 4-phosphate and phosphoenolpyruvate: step 6/7. Functionally, catalyzes the transfer of the enolpyruvyl moiety of phosphoenolpyruvate (PEP) to the 5-hydroxyl of shikimate-3-phosphate (S3P) to produce enolpyruvyl shikimate-3-phosphate and inorganic phosphate. The polypeptide is 3-phosphoshikimate 1-carboxyvinyltransferase (Salmonella typhi).